Consider the following 303-residue polypeptide: Glutamyl-Q tRNA(Asp) synthetase (303 aa).

Residues 16–20 (RFAPS) and Glu52 contribute to the L-glutamate site. Residues 19 to 29 (PSPSGPLHFGS) carry the 'HIGH' region motif. Zn(2+) contacts are provided by Cys108, Cys110, Tyr122, and Cys126. 2 residues coordinate L-glutamate: Tyr177 and Arg195. Positions 233 to 237 (KLSKQ) match the 'KMSKS' region motif. Lys236 is an ATP binding site.

Belongs to the class-I aminoacyl-tRNA synthetase family. GluQ subfamily. It depends on Zn(2+) as a cofactor.

Its function is as follows. Catalyzes the tRNA-independent activation of glutamate in presence of ATP and the subsequent transfer of glutamate onto a tRNA(Asp). Glutamate is transferred on the 2-amino-5-(4,5-dihydroxy-2-cyclopenten-1-yl) moiety of the queuosine in the wobble position of the QUC anticodon. The sequence is that of Glutamyl-Q tRNA(Asp) synthetase from Vibrio vulnificus (strain CMCP6).